Here is a 78-residue protein sequence, read N- to C-terminus: Large ribosomal subunit protein bL28 (78 aa).

The protein belongs to the bacterial ribosomal protein bL28 family.

The chain is Large ribosomal subunit protein bL28 from Hamiltonella defensa subsp. Acyrthosiphon pisum (strain 5AT).